Reading from the N-terminus, the 269-residue chain is Regulatory protein RecX (269 aa).

This sequence belongs to the RecX family.

It is found in the cytoplasm. Its function is as follows. Modulates RecA activity. In Listeria monocytogenes serotype 4b (strain F2365), this protein is Regulatory protein RecX.